The primary structure comprises 597 residues: Phragmoplastin interacting protein 1 (597 aa).

The disordered stretch occupies residues 18–136 (ESLSVSVSET…KTPKKAEEGN (119 aa)). Over residues 20-29 (LSVSVSETNP) the composition is skewed to polar residues. Residues 30 to 40 (QSQSLKLLLDS) show a composition bias toward low complexity. Basic residues-rich tracts occupy residues 43–53 (HKPRLSKREKR) and 112–129 (QKKK…NKTP). The Nuclear localization signal signature appears at 112 to 119 (QKKKNKKK). RRM domains lie at 161–238 (NKLY…QYVK) and 262–338 (NRVY…CALK). 3 consecutive CCHC-type zinc fingers follow at residues 397–411 (CYEC…TACP), 481–495 (CYEC…TACP), and 576–591 (CYEC…ACPN).

As to quaternary structure, interacts with phragmoplastins (e.g. DRP1A, DRP1B, DRP1C, DRP1D and DRP1E) and with GTP-bound ARAC11/ROP1 as well as with Ran2 transcripts.

It localises to the nucleus. The protein localises to the cell membrane. The protein resides in the cytoplasm. Its subcellular location is the cytoskeleton. It is found in the phragmoplast. In terms of biological role, RNA-binding protein which mediates polarized mRNA (e.g. Ran2 transcripts mRNA) transport from the nucleus to the vicinity of the cell plate during cytokinesis and phragmoplast formation. The protein is Phragmoplastin interacting protein 1 of Arabidopsis thaliana (Mouse-ear cress).